A 452-amino-acid polypeptide reads, in one-letter code: Trigger factor (452 aa).

The 87-residue stretch at 170–256 (DSIVKVDFVE…IKSIKKRDLP (87 aa)) folds into the PPIase FKBP-type domain.

The protein belongs to the FKBP-type PPIase family. Tig subfamily.

It localises to the cytoplasm. The catalysed reaction is [protein]-peptidylproline (omega=180) = [protein]-peptidylproline (omega=0). In terms of biological role, involved in protein export. Acts as a chaperone by maintaining the newly synthesized protein in an open conformation. Functions as a peptidyl-prolyl cis-trans isomerase. The protein is Trigger factor of Borreliella afzelii (strain PKo) (Borrelia afzelii).